The following is a 384-amino-acid chain: Ubiquitin-like modifier-activating enzyme 5 (384 aa).

Gly63, Asp84, Lys107, Asn130, and Asn164 together coordinate ATP. Residues Cys206 and Cys209 each coordinate Zn(2+). Cys230 functions as the Glycyl thioester intermediate in the catalytic mechanism. Positions 283 and 288 each coordinate Zn(2+). The tract at residues 352-375 (EAPEKSSAEATQAATAPVDDTSLE) is disordered.

This sequence belongs to the ubiquitin-activating E1 family. UBA5 subfamily.

In terms of biological role, E1-like enzyme which activates UFM1. This Drosophila persimilis (Fruit fly) protein is Ubiquitin-like modifier-activating enzyme 5.